The primary structure comprises 373 residues: MEQTVHVPLGARAYDVVIGPDLVAQAGQRIAPLLRRKTVAVLTDETVAALHLEALRAGLAADGIEMEALALPPGEATKGWPQFTRAVEWLLDKKVERGDIVIAFGGGVIGDLAGFAAAVLRRGVRFVQIPTSLLAQVDSSVGGKTGINAPQGKNLIGAFHQPSLVLADTAVLGTLTERDFLAGYGEVVKYGLLGDAAFFDWLEENAPAMAAGDMALRVEAVARSVQMKADIVARDETEQGDRALLNLGHTFCHALEAATGYSDRLLHGEGVAIGCALAFELSARLGLCSQEDPSRVRAHLKAMGMKTDLSDIPGDLPPAQELLDLMAQDKKVVDGQLRFILARGIGAAFVTADVPSEKVLEVLQEALAHTQPA.

NAD(+) contacts are provided by residues 107-111, 131-132, Lys-144, and Lys-153; these read GVIGD and TS. Positions 186, 249, and 267 each coordinate Zn(2+).

It belongs to the sugar phosphate cyclases superfamily. Dehydroquinate synthase family. Requires Co(2+) as cofactor. Zn(2+) serves as cofactor. The cofactor is NAD(+).

The protein localises to the cytoplasm. The catalysed reaction is 7-phospho-2-dehydro-3-deoxy-D-arabino-heptonate = 3-dehydroquinate + phosphate. The protein operates within metabolic intermediate biosynthesis; chorismate biosynthesis; chorismate from D-erythrose 4-phosphate and phosphoenolpyruvate: step 2/7. Functionally, catalyzes the conversion of 3-deoxy-D-arabino-heptulosonate 7-phosphate (DAHP) to dehydroquinate (DHQ). The protein is 3-dehydroquinate synthase of Ruegeria sp. (strain TM1040) (Silicibacter sp.).